Reading from the N-terminus, the 193-residue chain is BH3-interacting domain death agonist (193 aa).

The short motif at 87–101 is the BH3 element; sequence IAAQLAEIGDQLDKQ.

In terms of assembly, forms heterodimers either with the pro-apoptotic protein BAX or the anti-apoptotic protein Bcl-2.

It is found in the cytoplasm. The protein localises to the mitochondrion outer membrane. Induces caspases and apoptosis. Counters the protective effect of Bcl-2. This Gallus gallus (Chicken) protein is BH3-interacting domain death agonist (BID).